The sequence spans 144 residues: Large ribosomal subunit protein uL15 (144 aa).

Residues 1–53 are disordered; it reads MRLNTLSPAEGAKHAPKRVGRGIGSGLGKTAGRGHKGQNSRSGGGVRRGFEGG. Gly residues predominate over residues 21 to 31; it reads RGIGSGLGKTA.

This sequence belongs to the universal ribosomal protein uL15 family. Part of the 50S ribosomal subunit.

In terms of biological role, binds to the 23S rRNA. The polypeptide is Large ribosomal subunit protein uL15 (Serratia proteamaculans (strain 568)).